The sequence spans 122 residues: Small ribosomal subunit protein uS13 (122 aa).

The segment at 95 to 122 (GLPVRGQRTHTNARTRKGPAKPIAGKKK) is disordered.

Belongs to the universal ribosomal protein uS13 family. As to quaternary structure, part of the 30S ribosomal subunit. Forms a loose heterodimer with protein S19. Forms two bridges to the 50S subunit in the 70S ribosome.

Functionally, located at the top of the head of the 30S subunit, it contacts several helices of the 16S rRNA. In the 70S ribosome it contacts the 23S rRNA (bridge B1a) and protein L5 of the 50S subunit (bridge B1b), connecting the 2 subunits; these bridges are implicated in subunit movement. Contacts the tRNAs in the A and P-sites. This Caulobacter vibrioides (strain ATCC 19089 / CIP 103742 / CB 15) (Caulobacter crescentus) protein is Small ribosomal subunit protein uS13.